Here is a 336-residue protein sequence, read N- to C-terminus: MNIVVIGAGAWGTALAMSAAARGDGRVVTLWARDAAQAQAMRDSGENARYLPGVALPAALQVVHGEIDGHLAAADLIVIGTPMAALREWLGRLQHVPAPVAWLCKGFEAVPAGASAAAHGLMAHEVCAEVAPDLLCGVLSGPSFAAEVARHQPTALVAASRHAEVNDALVAAFHGDAMRVYANADIVGVEVGGAVKNVLAIATGLCDGLQLGLNARAALITRGLAEMTRLGLALGARTETFMGLSGLGDLVLTATGDLSRNRKVGLLLAQGRTLEQAVASLGHVAEGVYSARTVLARARLLNVEMPITETVVELLDGRLQAAEAVQHLMARDPRGE.

NADPH-binding residues include W11, R33, and K105. Positions 105, 141, and 143 each coordinate sn-glycerol 3-phosphate. Position 145 (A145) interacts with NADPH. Residues K196, D249, S259, R260, and N261 each coordinate sn-glycerol 3-phosphate. The Proton acceptor role is filled by K196. R260 contacts NADPH. Positions 284 and 286 each coordinate NADPH.

This sequence belongs to the NAD-dependent glycerol-3-phosphate dehydrogenase family.

The protein resides in the cytoplasm. It catalyses the reaction sn-glycerol 3-phosphate + NAD(+) = dihydroxyacetone phosphate + NADH + H(+). The enzyme catalyses sn-glycerol 3-phosphate + NADP(+) = dihydroxyacetone phosphate + NADPH + H(+). It participates in membrane lipid metabolism; glycerophospholipid metabolism. In terms of biological role, catalyzes the reduction of the glycolytic intermediate dihydroxyacetone phosphate (DHAP) to sn-glycerol 3-phosphate (G3P), the key precursor for phospholipid synthesis. This Delftia acidovorans (strain DSM 14801 / SPH-1) protein is Glycerol-3-phosphate dehydrogenase [NAD(P)+].